A 207-amino-acid chain; its full sequence is Putative 3-methyladenine DNA glycosylase (207 aa).

The protein belongs to the DNA glycosylase MPG family.

The chain is Putative 3-methyladenine DNA glycosylase from Burkholderia lata (strain ATCC 17760 / DSM 23089 / LMG 22485 / NCIMB 9086 / R18194 / 383).